The primary structure comprises 115 residues: Large ribosomal subunit protein bL20c (115 aa).

Belongs to the bacterial ribosomal protein bL20 family.

It localises to the plastid. Its subcellular location is the chloroplast. Binds directly to 23S ribosomal RNA and is necessary for the in vitro assembly process of the 50S ribosomal subunit. It is not involved in the protein synthesizing functions of that subunit. The protein is Large ribosomal subunit protein bL20c of Nymphaea alba (White water-lily).